Reading from the N-terminus, the 164-residue chain is Protein SprT (164 aa).

Residues 14–156 enclose the SprT-like domain; the sequence is QQAETFFKRP…LCRRCREILV (143 aa). Residue His69 coordinates Zn(2+). Glu70 is an active-site residue. His73 contributes to the Zn(2+) binding site.

Belongs to the SprT family. Zn(2+) serves as cofactor.

The protein localises to the cytoplasm. The chain is Protein SprT from Pseudomonas entomophila (strain L48).